The primary structure comprises 212 residues: Large ribosomal subunit protein uL3 (212 aa).

A disordered region spans residues arginine 134 to threonine 154. Glutamine 153 carries the N5-methylglutamine modification.

Belongs to the universal ribosomal protein uL3 family. In terms of assembly, part of the 50S ribosomal subunit. Forms a cluster with proteins L14 and L19. In terms of processing, methylated by PrmB.

Its function is as follows. One of the primary rRNA binding proteins, it binds directly near the 3'-end of the 23S rRNA, where it nucleates assembly of the 50S subunit. This Dichelobacter nodosus (strain VCS1703A) protein is Large ribosomal subunit protein uL3.